The chain runs to 725 residues: Polyribonucleotide nucleotidyltransferase (725 aa).

Aspartate 488 and aspartate 494 together coordinate Mg(2+). Positions 555–614 (PRMITMKIHPDKIREVIGKGGSTIQALTKETGTTIDIQEDGTITIASTSTDGMAEAKRRI) constitute a KH domain. The S1 motif domain occupies 624 to 692 (GKIYAGTVLK…EKGRLRLSLK (69 aa)). The interval 702–725 (ISPIAQGDAPAAAPAAPASPDQQQ) is disordered. Low complexity predominate over residues 706–725 (AQGDAPAAAPAAPASPDQQQ).

It belongs to the polyribonucleotide nucleotidyltransferase family. It depends on Mg(2+) as a cofactor.

It is found in the cytoplasm. It carries out the reaction RNA(n+1) + phosphate = RNA(n) + a ribonucleoside 5'-diphosphate. In terms of biological role, involved in mRNA degradation. Catalyzes the phosphorolysis of single-stranded polyribonucleotides processively in the 3'- to 5'-direction. The protein is Polyribonucleotide nucleotidyltransferase of Cupriavidus metallidurans (strain ATCC 43123 / DSM 2839 / NBRC 102507 / CH34) (Ralstonia metallidurans).